Reading from the N-terminus, the 286-residue chain is Gap junction alpha-6 protein (286 aa).

Topologically, residues 1 to 23 (MSDWSALHQLLEKVQPYSTAGGK) are cytoplasmic. The helical transmembrane segment at 24-41 (VWIKVLFIFRILLLGTAI) threads the bilayer. The Extracellular portion of the chain corresponds to 42–76 (ESAWSDEQFEFHCNTQQPGCENVCYDQAFPISHVR). Residues 77–99 (LWVLQVIFVSVPTLLHLAHVYYV) traverse the membrane as a helical segment. The Cytoplasmic segment spans residues 100–151 (IRQNEKLKKQEEEELKVAHFNGASGERRLQKHTGKHIKCGSKEHGNRKMRGR). The helical transmembrane segment at 152-174 (LLLTYMASIFFKSVFEVAFLLIQ) threads the bilayer. At 175-209 (WYLYGFTLSAVYICEQSPCPHRVDCFLSRPTEKTI) the chain is on the extracellular side. A helical membrane pass occupies residues 210 to 232 (FILFMLVVSMVSFVLNVIELFYV). Over 233–286 (LFKAIKNHLGNEKEEVYCNPVELQKPSCVSSSAVLTTICSSDQVVPVGLSSFYM) the chain is Cytoplasmic.

This sequence belongs to the connexin family. Alpha-type (group II) subfamily. In terms of assembly, a connexon is composed of a hexamer of connexins. In terms of tissue distribution, expressed in testis.

It localises to the cell membrane. Its subcellular location is the cell junction. It is found in the gap junction. One gap junction consists of a cluster of closely packed pairs of transmembrane channels, the connexons, through which materials of low MW diffuse from one cell to a neighboring cell. The sequence is that of Gap junction alpha-6 protein (Gja6) from Rattus norvegicus (Rat).